The primary structure comprises 379 residues: UDP-4-amino-4-deoxy-L-arabinose--oxoglutarate aminotransferase (379 aa).

Lys-182 is modified (N6-(pyridoxal phosphate)lysine).

Belongs to the DegT/DnrJ/EryC1 family. ArnB subfamily. In terms of assembly, homodimer. Requires pyridoxal 5'-phosphate as cofactor.

It carries out the reaction UDP-4-amino-4-deoxy-beta-L-arabinose + 2-oxoglutarate = UDP-beta-L-threo-pentopyranos-4-ulose + L-glutamate. Its pathway is nucleotide-sugar biosynthesis; UDP-4-deoxy-4-formamido-beta-L-arabinose biosynthesis; UDP-4-deoxy-4-formamido-beta-L-arabinose from UDP-alpha-D-glucuronate: step 2/3. It participates in bacterial outer membrane biogenesis; lipopolysaccharide biosynthesis. In terms of biological role, catalyzes the conversion of UDP-4-keto-arabinose (UDP-Ara4O) to UDP-4-amino-4-deoxy-L-arabinose (UDP-L-Ara4N). The modified arabinose is attached to lipid A and is required for resistance to polymyxin and cationic antimicrobial peptides. This chain is UDP-4-amino-4-deoxy-L-arabinose--oxoglutarate aminotransferase, found in Shigella flexneri.